The following is a 185-amino-acid chain: Ribosome-recycling factor (185 aa).

Residues 137 to 158 (NQVKKLEKDKEISEDESKKAQE) form a disordered region. The span at 140–158 (KKLEKDKEISEDESKKAQE) shows a compositional bias: basic and acidic residues.

The protein belongs to the RRF family.

Its subcellular location is the cytoplasm. In terms of biological role, responsible for the release of ribosomes from messenger RNA at the termination of protein biosynthesis. May increase the efficiency of translation by recycling ribosomes from one round of translation to another. The chain is Ribosome-recycling factor from Helicobacter pylori (strain P12).